We begin with the raw amino-acid sequence, 280 residues long: 3-methyl-2-oxobutanoate hydroxymethyltransferase (280 aa).

2 residues coordinate Mg(2+): Asp-45 and Asp-84. 3-methyl-2-oxobutanoate contacts are provided by residues 45–46 (DS), Asp-84, and Lys-114. Mg(2+) is bound at residue Glu-116. Glu-183 functions as the Proton acceptor in the catalytic mechanism.

Belongs to the PanB family. Homodecamer; pentamer of dimers. Mg(2+) serves as cofactor.

Its subcellular location is the cytoplasm. The enzyme catalyses 3-methyl-2-oxobutanoate + (6R)-5,10-methylene-5,6,7,8-tetrahydrofolate + H2O = 2-dehydropantoate + (6S)-5,6,7,8-tetrahydrofolate. Its pathway is cofactor biosynthesis; (R)-pantothenate biosynthesis; (R)-pantoate from 3-methyl-2-oxobutanoate: step 1/2. Functionally, catalyzes the reversible reaction in which hydroxymethyl group from 5,10-methylenetetrahydrofolate is transferred onto alpha-ketoisovalerate to form ketopantoate. The protein is 3-methyl-2-oxobutanoate hydroxymethyltransferase of Clostridium kluyveri (strain ATCC 8527 / DSM 555 / NBRC 12016 / NCIMB 10680 / K1).